A 470-amino-acid chain; its full sequence is Beta-Ala-Xaa dipeptidase (470 aa).

H87 is a binding site for Zn(2+). D89 is a catalytic residue. D119 contributes to the Zn(2+) binding site. E153 serves as the catalytic Proton acceptor. Zn(2+) contacts are provided by E154 and D177. R350 contacts substrate. H439 is a Zn(2+) binding site.

Belongs to the peptidase M20A family. Zn(2+) is required as a cofactor.

Its subcellular location is the cytoplasm. Its activity is regulated as follows. Fully inhibited by 1,10-phenanthroline or EDTA. In terms of biological role, is a relatively unspecific dipeptidase cleaving a variety of dipeptides, notably those with an N-terminal beta-Ala or D-Ala residue, e.g. carnosine (beta-Ala-His). To a lesser extent, also shows aminopeptidase activity, since it is able to catalyze the removal of the N-terminal amino acid from a few distinct tripeptides. In Lactobacillus delbrueckii subsp. lactis, this protein is Beta-Ala-Xaa dipeptidase (pepV).